The following is a 397-amino-acid chain: Mesoderm posterior protein 2 (397 aa).

Disordered regions lie at residues 28–92 (WDST…REKL), 152–208 (QRGD…GRRP), 222–295 (SPSA…VPWT), and 351–376 (PNSE…SGLR). Composition is skewed to low complexity over residues 32–48 (SPAS…CDGA) and 58–71 (SCSS…ATTP). The region spanning 81-135 (GQRQSASEREKLRMRTLARALHELRRFLPPSLAPAGQSLTKIETLRLAIRYIGHL) is the bHLH domain. Tandem repeats lie at residues 179–180 (GQ), 181–182 (GQ), 183–184 (GQ), 185–186 (GQ), 187–188 (GQ), 189–190 (GQ), 191–192 (GQ), 193–194 (GQ), 195–196 (GQ), 197–198 (GQ), 199–200 (GQ), 201–202 (GQ), and 203–204 (GQ). Positions 179 to 204 (GQGQGQGQGQGQGQGQGQGQGQGQGQ) are 13 X 2 AA tandem repeats of G-Q. The segment covering 180–206 (QGQGQGQGQGQGQGQGQGQGQGQGQGR) has biased composition (gly residues). Over residues 235–244 (RLGRGVHDTD) the composition is skewed to basic and acidic residues. 2 stretches are compositionally biased toward polar residues: residues 258–270 (PPYS…SDAS) and 365–375 (SEASPPQSSGL).

Degraded by the proteasome.

The protein resides in the nucleus. In terms of biological role, transcription factor with important role in somitogenesis. Defines the rostrocaudal patterning of the somite by participating in distinct Notch pathways. Also regulates the FGF signaling pathway. Specifies the rostral half of the somites. Generates rostro-caudal polarity of somites by down-regulating in the presumptive rostral domain DLL1, a Notch ligand. Participates in the segment border formation by activating in the anterior presomitic mesoderm LFNG, a negative regulator of DLL1-Notch signaling. Acts as a strong suppressor of Notch activity. Together with MESP1 is involved in the epithelialization of somitic mesoderm and in the development of cardiac mesoderm. The polypeptide is Mesoderm posterior protein 2 (MESP2) (Homo sapiens (Human)).